The chain runs to 168 residues: MNAQLFNLESRLDELENEINTQYCELDTNLDALKSNRIELESQLEKFESSLTNRLQGSISNNCRNDLLNLGYTHSQVDCMSDEEVYAALDKIDEEIHNTDQDYSTGFEDLEKQIIEMKRDYFIDRKERGSGNFDEAWEGEILDLEFEYTVLCLEKGLEPLNYIITWEG.

Residues 1–53 adopt a coiled-coil conformation; that stretch reads MNAQLFNLESRLDELENEINTQYCELDTNLDALKSNRIELESQLEKFESSLTN.

This is SPbeta prophage-derived uncharacterized protein YonX (yonX) from Bacillus subtilis (strain 168).